The chain runs to 196 residues: Small ribosomal subunit protein uS4c (196 aa).

The interval 16-40 is disordered; it reads GALPGLTRKTPKSGSNLKKKFHSGK. In terms of domain architecture, S4 RNA-binding spans 89 to 152; it reads MRLDNTLFRL…RSKDLVRNSI (64 aa).

It belongs to the universal ribosomal protein uS4 family. Part of the 30S ribosomal subunit. Contacts protein S5. The interaction surface between S4 and S5 is involved in control of translational fidelity.

The protein localises to the plastid. Its subcellular location is the chloroplast. In terms of biological role, one of the primary rRNA binding proteins, it binds directly to 16S rRNA where it nucleates assembly of the body of the 30S subunit. Functionally, with S5 and S12 plays an important role in translational accuracy. The sequence is that of Small ribosomal subunit protein uS4c (rps4) from Anthoxanthum odoratum (Sweet vernal grass).